The chain runs to 394 residues: Aspergillopepsin-1 (394 aa).

Residues 1 to 20 (MVVFSKTAALVLGLSTAVSA) form the signal peptide. Positions 21 to 69 (APAPTRKGFTINQIARPANKTRTVNLPGLYARSLAKFGGTVPQSVKEAA) are cleaved as a propeptide — activation peptide. The region spanning 85–391 (YLTPVTVGKS…NSEGPKLGFA (307 aa)) is the Peptidase A1 domain. Asp101 is a catalytic residue. Ser129 and Ser304 each carry an O-linked (Man...) serine glycan. Residues Cys319 and Cys354 are joined by a disulfide bond.

It belongs to the peptidase A1 family. As to quaternary structure, monomer.

It is found in the secreted. The catalysed reaction is Hydrolysis of proteins with broad specificity. Generally favors hydrophobic residues in P1 and P1', but also accepts Lys in P1, which leads to activation of trypsinogen. Does not clot milk.. In terms of biological role, secreted aspartic endopeptidase that allows assimilation of proteinaceous substrates. The scissile peptide bond is attacked by a nucleophilic water molecule activated by two aspartic residues in the active site. Shows a broad primary substrate specificity. Favors hydrophobic residues at the P1 and P1' positions, but also accepts a lysine residue in the P1 position, leading to the activation of trypsinogen and chymotrypsinogen A. The chain is Aspergillopepsin-1 (pepA) from Aspergillus phoenicis (Aspergillus saitoi).